Here is a 624-residue protein sequence, read N- to C-terminus: Atypical kinase COQ8B, mitochondrial (624 aa).

The disordered stretch occupies residues 90–117 (EMPPDFSSKDGRGETSETPVGAATGTIK). A helical membrane pass occupies residues 189–205 (LANFGGLAVGLGIGAIA). The KxGQ motif motif lies at 249 to 252 (KIGQ). The Protein kinase domain maps to 285 to 517 (MHKVLEEELG…ATVLKKSKDL (233 aa)). An AAAS motif motif is present at residues 310–313 (AAAS). ATP is bound by residues Ser-313, Lys-331, and 418 to 421 (MELV). Catalysis depends on Asp-461, which acts as the Proton acceptor. The ATP site is built by Asn-466 and Asp-480.

The protein belongs to the protein kinase superfamily. ADCK protein kinase family. Homodimer; homodimerizes via its transmembrane region. Interacts with the multi-subunit COQ enzyme complex.

The protein localises to the mitochondrion membrane. It is found in the cytoplasm. Its subcellular location is the cytosol. It localises to the cell membrane. It functions in the pathway cofactor biosynthesis; ubiquinone biosynthesis. Its function is as follows. Atypical kinase involved in the biosynthesis of coenzyme Q, also named ubiquinone, an essential lipid-soluble electron transporter for aerobic cellular respiration. Its substrate specificity is still unclear: may act as a protein kinase that mediates phosphorylation of COQ3. According to other reports, acts as a small molecule kinase, possibly a lipid kinase that phosphorylates a prenyl lipid in the ubiquinone biosynthesis pathway, as suggested by its ability to bind coenzyme Q lipid intermediates. However, the small molecule kinase activity was not confirmed by another publication. Required for podocyte migration. The sequence is that of Atypical kinase COQ8B, mitochondrial from Danio rerio (Zebrafish).